Reading from the N-terminus, the 359-residue chain is Peptide chain release factor 1 (359 aa).

N5-methylglutamine is present on glutamine 236.

It belongs to the prokaryotic/mitochondrial release factor family. Post-translationally, methylated by PrmC. Methylation increases the termination efficiency of RF1.

It is found in the cytoplasm. In terms of biological role, peptide chain release factor 1 directs the termination of translation in response to the peptide chain termination codons UAG and UAA. The sequence is that of Peptide chain release factor 1 from Streptococcus mutans serotype c (strain ATCC 700610 / UA159).